The chain runs to 447 residues: UDP-N-acetylglucosamine 1-carboxyvinyltransferase (447 aa).

27–28 (KN) contributes to the phosphoenolpyruvate binding site. UDP-N-acetyl-alpha-D-glucosamine is bound at residue R97. The active-site Proton donor is the C121. At C121 the chain carries 2-(S-cysteinyl)pyruvic acid O-phosphothioketal. UDP-N-acetyl-alpha-D-glucosamine contacts are provided by residues 126 to 130 (RPVDL), D314, and V336.

This sequence belongs to the EPSP synthase family. MurA subfamily.

Its subcellular location is the cytoplasm. The enzyme catalyses phosphoenolpyruvate + UDP-N-acetyl-alpha-D-glucosamine = UDP-N-acetyl-3-O-(1-carboxyvinyl)-alpha-D-glucosamine + phosphate. It functions in the pathway cell wall biogenesis; peptidoglycan biosynthesis. Its function is as follows. Cell wall formation. Adds enolpyruvyl to UDP-N-acetylglucosamine. The protein is UDP-N-acetylglucosamine 1-carboxyvinyltransferase of Nostoc sp. (strain PCC 7120 / SAG 25.82 / UTEX 2576).